The primary structure comprises 158 residues: Placenta growth factor (158 aa).

The N-terminal stretch at methionine 1–alanine 18 is a signal peptide. Residues asparagine 29 and asparagine 30 are each glycosylated (N-linked (GlcNAc...) asparagine). 3 cysteine pairs are disulfide-bonded: cysteine 48/cysteine 90, cysteine 79/cysteine 125, and cysteine 83/cysteine 127. Asparagine 97 is a glycosylation site (N-linked (GlcNAc...) asparagine). The interval alanine 136–proline 158 is disordered. The segment covering glutamate 137–arginine 149 has biased composition (basic residues).

It belongs to the PDGF/VEGF growth factor family. As to quaternary structure, antiparallel homodimer; disulfide-linked. Also found as heterodimer with VEGFA/VEGF.

Its subcellular location is the secreted. Its function is as follows. Growth factor active in angiogenesis and endothelial cell growth, stimulating their proliferation and migration. It binds to the receptor FLT1/VEGFR-1. Also promotes cell tumor growth. In Mus musculus (Mouse), this protein is Placenta growth factor (Pgf).